Here is a 113-residue protein sequence, read N- to C-terminus: Mini zinc finger protein 2 (113 aa).

Residues 24–83 (YGECRRNHAASTGGHAVDGCREFIAAEDGGGGNSTSAVGVAAAALKCAACGCHRSFHRRV) form a ZF-HD dimerization-type; degenerate zinc finger. The segment at 93-113 (DCASGDTSSSSPSSSSSLSSE) is disordered. A compositionally biased stretch (low complexity) spans 100-113 (SSSSPSSSSSLSSE).

Homo- and heterodimers.

The protein resides in the cytoplasm. Functionally, inhibits zinc finger homeodomain (ZHD) transcription factors, by interacting with them to prevent both their nuclear localization and their DNA-binding properties. This Oryza sativa subsp. japonica (Rice) protein is Mini zinc finger protein 2 (MIF3).